The following is a 200-amino-acid chain: DNA-binding protein HupB (200 aa).

A bacterial histone-like domain region spans residues 1–90 (MNKAELIDVL…PGAQFKAVVA (90 aa)). N6-acetyllysine is present on residues lysine 3, lysine 72, lysine 86, lysine 103, lysine 137, lysine 144, and lysine 156. The interval 101–200 (AVKRGVATSA…KVTAAKRGRK (100 aa)) is degenerate repeats region. A disordered region spans residues 179–200 (AKKAAVKKAPAKKVTAAKRGRK).

This sequence belongs to the bacterial histone-like protein family. Long actinobacterial subfamily. Binds to human laminin-2. Post-translationally, may also be methylated and possibly phosphorylated in vivo.

The protein localises to the cytoplasm. Its subcellular location is the nucleoid. It is found in the secreted. The protein resides in the cell wall. It localises to the cell surface. The enzyme catalyses 4 Fe(2+) + O2 + 4 H(+) = 4 Fe(3+) + 2 H2O. A nucleoid-associated protein (NAP) that plays a role in local chromosome architecture and chromosome compactation. Required for biofilm formation, stress survival and possibly in cell wall assembly, probably influences transcription. RNase E and HupB jointly contribute to cellular adaptation to changing growth conditions and survival during antibiotic treatment and in the host. Its function is as follows. Binds Fe(3+) but not Fe(2+). Has ferroxidase activity, converts Fe(2+) into Fe(3+) and in the presence of H(2)O(2) prevents the generation of hydroxyl radicals (the Fenton reaction). Protects DNA from damage in the presence of FeSO(4) and H(2)O(2). May function in iron storage. In terms of biological role, may be involved in entry into human Schwann cells. The polypeptide is DNA-binding protein HupB (Mycobacterium leprae (strain TN)).